A 443-amino-acid chain; its full sequence is Cyclin-A2-1 (443 aa).

The span at methionine 1–asparagine 10 shows a compositional bias: basic residues. Positions methionine 1–arginine 61 are disordered. Positions alanine 11–asparagine 25 are enriched in basic and acidic residues.

Belongs to the cyclin family. Cyclin AB subfamily. In terms of tissue distribution, expressed in tissues with active cell division: apical root and shoot meristems, lateral root and leaf primordia, floral meristems and developing pollen.

May negatively regulate endocycles and act as a regulator of ploidy levels in endoreduplication. The polypeptide is Cyclin-A2-1 (CYCA2-1) (Arabidopsis thaliana (Mouse-ear cress)).